The following is a 426-amino-acid chain: Enolase (426 aa).

A (2R)-2-phosphoglycerate-binding site is contributed by Gln-165. The active-site Proton donor is the Glu-209. Positions 244, 287, and 313 each coordinate Mg(2+). Lys-338, Arg-367, Ser-368, and Lys-389 together coordinate (2R)-2-phosphoglycerate. Catalysis depends on Lys-338, which acts as the Proton acceptor.

The protein belongs to the enolase family. The cofactor is Mg(2+).

It is found in the cytoplasm. The protein resides in the secreted. Its subcellular location is the cell surface. The catalysed reaction is (2R)-2-phosphoglycerate = phosphoenolpyruvate + H2O. The protein operates within carbohydrate degradation; glycolysis; pyruvate from D-glyceraldehyde 3-phosphate: step 4/5. In terms of biological role, catalyzes the reversible conversion of 2-phosphoglycerate (2-PG) into phosphoenolpyruvate (PEP). It is essential for the degradation of carbohydrates via glycolysis. The polypeptide is Enolase (Methanococcus vannielii (strain ATCC 35089 / DSM 1224 / JCM 13029 / OCM 148 / SB)).